A 366-amino-acid polypeptide reads, in one-letter code: MSADKSPYQIEPYKTVGAHRDLIHCVSFDPHGRRMATCASDMTMAIWDRQPDGNWRRSAHWKCHGGAVWRVIWAHPEFGQIVASCSYDRTIVIWEEQIVRTEKDLKCKESQWIRRTIISDNRSDVTDICFSPRHLGLSLASCNVLGAVRIYEAPDVVDASRWNLIHELQAFHTRCGCVTWSLSRMHRPLIAVGSDEKKAGGKERVVIYENIDGLRKWQRIHSLVFDMPCPITDLKFSPISMVDSHQLAIASGDVHVFNIKVPRTAILEEDGVDNPIHLADYSFQRVALLGDQRKAWRIRYNLIGSVITSTSLDGTLRSWKSLFVNQWVKLSEMNVDDYVPTADEVHKIVEAKTTERLPSQLDKVYF.

WD repeat units lie at residues 18-57 (AHRDLIHCVSFDPHGRRMATCASDMTMAIWDRQPDGNWRR), 63-104 (CHGG…TEKD), 111-152 (QWIR…RIYE), 161-209 (RWNL…VIYE), 226-267 (DMPC…TAIL), and 290-329 (GDQRKAWRIRYNLIGSVITSTSLDGTLRSWKSLFVNQWVK).

This sequence belongs to the WD repeat SEC13 family. As to quaternary structure, component of the nuclear pore complex (NPC). Probably part of the GATOR complex.

It is found in the nucleus. Its subcellular location is the nuclear pore complex. It localises to the lysosome membrane. Its function is as follows. Probable component of the nuclear pore complex (NPC) which is involved in the trafficking of macromolecules between the cytoplasm and nucleus. Functionally, as a component of the GATOR complex may function in the amino acid-sensing branch of the TORC1 signaling pathway. In Caenorhabditis briggsae, this protein is Nucleoporin SEH1.